The sequence spans 406 residues: Phloroisovalerophenone synthase (406 aa).

Residue Cys-171 is part of the active site.

The protein belongs to the thiolase-like superfamily. Chalcone/stilbene synthases family.

It catalyses the reaction 3-methylbutanoyl-CoA + 3 malonyl-CoA + 3 H(+) = phlorisovalerophenone + 3 CO2 + 4 CoA. Functionally, produces 3-methyl-1-(2,4,6-trihydroxyphenyl)butan-1-one (phloroisovalerophenone). The polypeptide is Phloroisovalerophenone synthase (VPS) (Psilotum nudum (Whisk fern)).